The chain runs to 172 residues: Scytalone dehydratase-like protein Arp1 (172 aa).

Substrate is bound at residue tyrosine 49. Residues histidine 84 and histidine 109 contribute to the active site. Asparagine 130 is a substrate binding site.

This sequence belongs to the scytalone dehydratase family. Homotrimer. Each subunit contains an active site, located in the central part of the hydrophobic core of the monomer, which functions independently.

Scytalone dehydratase-like protein; part of the Pks2 gene cluster that mediates the formation of infectious structures (appressoria), enabling these fungi to kill insects faster. The product of the Pks2 gene cluster is different from the one of Pks1 and has still not been identified. This chain is Scytalone dehydratase-like protein Arp1, found in Metarhizium guizhouense (strain ARSEF 977).